The sequence spans 518 residues: Protein translocase subunit SecD (518 aa).

6 consecutive transmembrane segments (helical) span residues 9–29, 361–381, 384–404, 406–426, 452–474, and 486–506; these read IFLS…NFMQ, LIGF…LGLF, IALS…QATL, LPGI…NVLI, FATI…IFGV, and IGII…IDIW.

This sequence belongs to the SecD/SecF family. SecD subfamily. Forms a complex with SecF. Part of the essential Sec protein translocation apparatus which comprises SecA, SecYEG and auxiliary proteins SecDF-YajC and YidC.

The protein localises to the cell inner membrane. In terms of biological role, part of the Sec protein translocase complex. Interacts with the SecYEG preprotein conducting channel. SecDF uses the proton motive force (PMF) to complete protein translocation after the ATP-dependent function of SecA. The sequence is that of Protein translocase subunit SecD from Rickettsia conorii (strain ATCC VR-613 / Malish 7).